The sequence spans 729 residues: Catalase-peroxidase (729 aa).

Residues 1–24 are disordered; that stretch reads MDAKTNDGKAGQCPFTSGRGHKNR. The segment at residues 95 to 217 is a cross-link (tryptophyl-tyrosyl-methioninium (Trp-Tyr) (with M-243)); the sequence is WHSAGTYRIT…LAAVQMGLIY (123 aa). Residue H96 is the Proton acceptor of the active site. A cross-link (tryptophyl-tyrosyl-methioninium (Tyr-Met) (with W-95)) is located at residues 217–243; it reads YVNPEGPNGQPDPLAAAKDIRETFLRM. H258 is a binding site for heme b.

This sequence belongs to the peroxidase family. Peroxidase/catalase subfamily. As to quaternary structure, homodimer or homotetramer. Requires heme b as cofactor. In terms of processing, formation of the three residue Trp-Tyr-Met cross-link is important for the catalase, but not the peroxidase activity of the enzyme.

The enzyme catalyses H2O2 + AH2 = A + 2 H2O. It carries out the reaction 2 H2O2 = O2 + 2 H2O. Bifunctional enzyme with both catalase and broad-spectrum peroxidase activity. In Nitrobacter winogradskyi (strain ATCC 25391 / DSM 10237 / CIP 104748 / NCIMB 11846 / Nb-255), this protein is Catalase-peroxidase.